The chain runs to 255 residues: tRNA (guanine-N(7)-)-methyltransferase (255 aa).

S-adenosyl-L-methionine is bound by residues E86, E111, D138, and D161. D161 is an active-site residue. Substrate contacts are provided by residues K165, D197, and 234–237 (TKFE).

This sequence belongs to the class I-like SAM-binding methyltransferase superfamily. TrmB family.

It carries out the reaction guanosine(46) in tRNA + S-adenosyl-L-methionine = N(7)-methylguanosine(46) in tRNA + S-adenosyl-L-homocysteine. It functions in the pathway tRNA modification; N(7)-methylguanine-tRNA biosynthesis. In terms of biological role, catalyzes the formation of N(7)-methylguanine at position 46 (m7G46) in tRNA. The polypeptide is tRNA (guanine-N(7)-)-methyltransferase (Pasteurella multocida (strain Pm70)).